Consider the following 339-residue polypeptide: Aspartate carbamoyltransferase catalytic subunit (339 aa).

Carbamoyl phosphate is bound by residues Arg-60 and Thr-61. Lys-88 provides a ligand contact to L-aspartate. Carbamoyl phosphate contacts are provided by Arg-110, His-143, and Gln-146. The L-aspartate site is built by Arg-183 and Arg-254. Carbamoyl phosphate contacts are provided by Gly-295 and Pro-296.

The protein belongs to the aspartate/ornithine carbamoyltransferase superfamily. ATCase family. As to quaternary structure, heterododecamer (2C3:3R2) of six catalytic PyrB chains organized as two trimers (C3), and six regulatory PyrI chains organized as three dimers (R2).

It carries out the reaction carbamoyl phosphate + L-aspartate = N-carbamoyl-L-aspartate + phosphate + H(+). The protein operates within pyrimidine metabolism; UMP biosynthesis via de novo pathway; (S)-dihydroorotate from bicarbonate: step 2/3. Catalyzes the condensation of carbamoyl phosphate and aspartate to form carbamoyl aspartate and inorganic phosphate, the committed step in the de novo pyrimidine nucleotide biosynthesis pathway. This Prochlorococcus marinus (strain MIT 9312) protein is Aspartate carbamoyltransferase catalytic subunit.